The following is a 710-amino-acid chain: Protein CNGC15a (710 aa).

6 helical membrane passes run 85–105 (IFLA…YLPV), 115–135 (SIGL…FYII), 174–194 (LWSD…AVIP), 207–226 (VVRL…IYPL), 248–268 (YLTL…LLSI), and 368–388 (AEIN…ALLI). Residue 474-559 (LFDQMDDRML…WALDPRPTAV (86 aa)) participates in a nucleoside 3',5'-cyclic phosphate binding.

It belongs to the cyclic nucleotide-gated cation channel (TC 1.A.1.5) family. As to quaternary structure, interacts (via N-terminus) with DMI1 (via c-terminus). The Nod factor has no effect on this interaction, implying that the complex is maintained after activation. Expressed in roots, stems, leaves, flowers and pods.

The protein localises to the nucleus membrane. Cyclic nucleotide-gated channel involved in the establishment of both rhizobial and mycorrhizal associations. Required for full activation of nuclear-localized Ca(2+) oscillations by Nod and Myc factors. Simultaneous activation of the K(+)-permeable channel DMI1 and the Ca(2+) channel CNGC15 can give rise to sustained Ca(2+) oscillations. May function during fertilization in both female and male gametophytic Ca(2+) signaling. The chain is Protein CNGC15a from Medicago truncatula (Barrel medic).